The sequence spans 736 residues: Probable potassium transport system protein Kup 2 (736 aa).

12 helical membrane passes run 1 to 21 (MAIV…LYTA), 42 to 62 (MLSL…VLIA), 84 to 104 (GAWL…DSVL), 126 to 146 (LFDE…VILF), 156 to 176 (IGKV…IVGV), 204 to 224 (AAGI…EALY), 239 to 259 (WPFI…WMLA), 287 to 307 (AVIL…TGAF), 334 to 354 (LYIP…LAIF), 364 to 384 (YGLA…VYLW), 390 to 410 (VGAI…FIAS), and 414 to 434 (FLHG…VMYT). Disordered stretches follow at residues 649-678 (TDTA…DTTS) and 693-736 (AEAR…KQKR). 2 stretches are compositionally biased toward low complexity: residues 660–677 (PTRA…MDTT) and 700–709 (EAAAADAPAE). Basic and acidic residues predominate over residues 710-721 (QGDKGDKGKAEN).

This sequence belongs to the HAK/KUP transporter (TC 2.A.72) family.

The protein resides in the cell membrane. It catalyses the reaction K(+)(in) + H(+)(in) = K(+)(out) + H(+)(out). Functionally, transport of potassium into the cell. Likely operates as a K(+):H(+) symporter. The polypeptide is Probable potassium transport system protein Kup 2 (Bifidobacterium longum (strain NCC 2705)).